The chain runs to 147 residues: Putative HTH-type transcriptional regulator slr0846 (147 aa).

Residues 2-130 (KLTTKSHYSV…YSITLADLYY (129 aa)) form the HTH rrf2-type domain.

The sequence is that of Putative HTH-type transcriptional regulator slr0846 from Synechocystis sp. (strain ATCC 27184 / PCC 6803 / Kazusa).